The chain runs to 242 residues: Ribose-5-phosphate isomerase A (242 aa).

Substrate-binding positions include 39-42 (SGST), 95-98 (DGAD), and 108-111 (KGGG). Residue Glu117 is the Proton acceptor of the active site. Substrate is bound at residue Lys135.

This sequence belongs to the ribose 5-phosphate isomerase family. Homodimer.

It catalyses the reaction aldehydo-D-ribose 5-phosphate = D-ribulose 5-phosphate. It functions in the pathway carbohydrate degradation; pentose phosphate pathway; D-ribose 5-phosphate from D-ribulose 5-phosphate (non-oxidative stage): step 1/1. Catalyzes the reversible conversion of ribose-5-phosphate to ribulose 5-phosphate. The polypeptide is Ribose-5-phosphate isomerase A (Chlamydia trachomatis serovar D (strain ATCC VR-885 / DSM 19411 / UW-3/Cx)).